A 254-amino-acid polypeptide reads, in one-letter code: Metalloprotease YcaL (254 aa).

A signal peptide spans 1–19 (MKNTKLLLAIATSAALLTG). C20 carries N-palmitoyl cysteine lipidation. A lipid anchor (S-diacylglycerol cysteine) is attached at C20. A Zn(2+)-binding site is contributed by H134. E135 is an active-site residue. Positions 138 and 193 each coordinate Zn(2+). The tract at residues 227–254 (GRTQSMFDSHPPSTERAQHIRDRIASGK) is disordered. Residues 242–254 (RAQHIRDRIASGK) show a composition bias toward basic and acidic residues.

Belongs to the peptidase M48B family. Zn(2+) serves as cofactor.

It is found in the cell inner membrane. Functionally, involved in the degradation of the LPS-assembly protein LptD. Degrades LptD that have engaged the Bam complex but are stalled at an early step in the outer membrane protein assembly process. This Escherichia coli (strain K12) protein is Metalloprotease YcaL (ycaL).